Consider the following 484-residue polypeptide: tRNA sulfurtransferase (484 aa).

The THUMP domain maps to 63–167 (QAFGERLACI…GDKLYMVTKR (105 aa)). Residues 185–186 (LI), Lys-267, Gly-289, and Gln-298 each bind ATP. A disulfide bond links Cys-346 and Cys-458. Residues 406–484 (IDTNEVVIDI…GYHNVKVYRP (79 aa)) form the Rhodanese domain. Residue Cys-458 is the Cysteine persulfide intermediate of the active site.

It belongs to the ThiI family.

Its subcellular location is the cytoplasm. The catalysed reaction is [ThiI sulfur-carrier protein]-S-sulfanyl-L-cysteine + a uridine in tRNA + 2 reduced [2Fe-2S]-[ferredoxin] + ATP + H(+) = [ThiI sulfur-carrier protein]-L-cysteine + a 4-thiouridine in tRNA + 2 oxidized [2Fe-2S]-[ferredoxin] + AMP + diphosphate. It carries out the reaction [ThiS sulfur-carrier protein]-C-terminal Gly-Gly-AMP + S-sulfanyl-L-cysteinyl-[cysteine desulfurase] + AH2 = [ThiS sulfur-carrier protein]-C-terminal-Gly-aminoethanethioate + L-cysteinyl-[cysteine desulfurase] + A + AMP + 2 H(+). It functions in the pathway cofactor biosynthesis; thiamine diphosphate biosynthesis. In terms of biological role, catalyzes the ATP-dependent transfer of a sulfur to tRNA to produce 4-thiouridine in position 8 of tRNAs, which functions as a near-UV photosensor. Also catalyzes the transfer of sulfur to the sulfur carrier protein ThiS, forming ThiS-thiocarboxylate. This is a step in the synthesis of thiazole, in the thiamine biosynthesis pathway. The sulfur is donated as persulfide by IscS. In Shewanella sp. (strain MR-4), this protein is tRNA sulfurtransferase.